A 101-amino-acid polypeptide reads, in one-letter code: NADH-quinone oxidoreductase subunit K 1 (101 aa).

The next 3 membrane-spanning stretches (helical) occupy residues 4–24, 31–51, and 64–84; these read IGTM…TVGV, VVIL…LVAF, and IFVM…VIAF.

It belongs to the complex I subunit 4L family. As to quaternary structure, NDH-1 is composed of 14 different subunits. Subunits NuoA, H, J, K, L, M, N constitute the membrane sector of the complex.

It is found in the cell inner membrane. It carries out the reaction a quinone + NADH + 5 H(+)(in) = a quinol + NAD(+) + 4 H(+)(out). Functionally, NDH-1 shuttles electrons from NADH, via FMN and iron-sulfur (Fe-S) centers, to quinones in the respiratory chain. The immediate electron acceptor for the enzyme in this species is believed to be ubiquinone. Couples the redox reaction to proton translocation (for every two electrons transferred, four hydrogen ions are translocated across the cytoplasmic membrane), and thus conserves the redox energy in a proton gradient. This chain is NADH-quinone oxidoreductase subunit K 1, found in Koribacter versatilis (strain Ellin345).